The following is a 274-amino-acid chain: ATP synthase subunit a (274 aa).

A run of 5 helical transmembrane segments spans residues 44–64 (VDSM…FYMV), 110–130 (FIWV…FPFI), 142–164 (IVPS…LILF), 212–232 (LFGN…LLPW), and 243–263 (AIFH…LTIV).

The protein belongs to the ATPase A chain family. F-type ATPases have 2 components, CF(1) - the catalytic core - and CF(0) - the membrane proton channel. CF(1) has five subunits: alpha(3), beta(3), gamma(1), delta(1), epsilon(1). CF(0) has three main subunits: a(1), b(2) and c(9-12). The alpha and beta chains form an alternating ring which encloses part of the gamma chain. CF(1) is attached to CF(0) by a central stalk formed by the gamma and epsilon chains, while a peripheral stalk is formed by the delta and b chains.

The protein localises to the cell membrane. Functionally, key component of the proton channel; it plays a direct role in the translocation of protons across the membrane. The polypeptide is ATP synthase subunit a (Buchnera aphidicola subsp. Acyrthosiphon pisum (strain APS) (Acyrthosiphon pisum symbiotic bacterium)).